Here is a 382-residue protein sequence, read N- to C-terminus: Lipid-A-disaccharide synthase (382 aa).

Belongs to the LpxB family.

The enzyme catalyses 2-N,3-O-bis[(3R)-3-hydroxytetradecanoyl]-alpha-D-glucosaminyl 1-phosphate + UDP-2-N,3-O-bis[(3R)-3-hydroxytetradecanoyl]-alpha-D-glucosamine = lipid A disaccharide (E. coli) + UDP + H(+). The catalysed reaction is a lipid X + a UDP-2-N,3-O-bis[(3R)-3-hydroxyacyl]-alpha-D-glucosamine = a lipid A disaccharide + UDP + H(+). It participates in glycolipid biosynthesis; lipid IV(A) biosynthesis; lipid IV(A) from (3R)-3-hydroxytetradecanoyl-[acyl-carrier-protein] and UDP-N-acetyl-alpha-D-glucosamine: step 5/6. Functionally, condensation of UDP-2,3-diacylglucosamine and 2,3-diacylglucosamine-1-phosphate to form lipid A disaccharide, a precursor of lipid A, a phosphorylated glycolipid that anchors the lipopolysaccharide to the outer membrane of the cell. This is Lipid-A-disaccharide synthase from Salmonella typhimurium (strain LT2 / SGSC1412 / ATCC 700720).